The sequence spans 113 residues: Cytochrome c55X (113 aa).

Positions 1-26 are cleaved as a signal peptide; that stretch reads MTVARHAVSRLGLALASFLLFPLALA. Positions 45, 48, and 49 each coordinate heme c.

Binds 1 heme c group covalently per subunit.

The protein localises to the periplasm. Functionally, monoheme c-type cytochrome. The polypeptide is Cytochrome c55X (nirC) (Stutzerimonas stutzeri (Pseudomonas stutzeri)).